The following is a 312-amino-acid chain: Serine/threonine-protein phosphatase CPPED1 (312 aa).

A Phosphoserine modification is found at Ser-2. Positions 47 to 250 (KAWSTGNCDA…AVFSGHYHRN (204 aa)) are catalytic. The a divalent metal cation site is built by Asp-90, Asn-127, and His-246. Phosphoserine is present on Ser-293.

Belongs to the metallophosphoesterase superfamily. CPPED1 family. A divalent metal cation serves as cofactor.

It is found in the cytoplasm. The enzyme catalyses O-phospho-L-seryl-[protein] + H2O = L-seryl-[protein] + phosphate. It catalyses the reaction O-phospho-L-threonyl-[protein] + H2O = L-threonyl-[protein] + phosphate. Functionally, protein phosphatase that dephosphorylates AKT family kinase specifically at 'Ser-473', blocking cell cycle progression and promoting cell apoptosis. May play an inhibitory role in glucose uptake by adipocytes. This is Serine/threonine-protein phosphatase CPPED1 (Cpped1) from Mus musculus (Mouse).